Consider the following 148-residue polypeptide: Snaclec B9 (148 aa).

Residues 1–24 (MGRFIFVSFGLLVVFLSLSGTGAA) form the signal peptide. Disulfide bonds link Cys-27–Cys-38, Cys-55–Cys-144, and Cys-121–Cys-136. The C-type lectin domain maps to 34–145 (YDQHCYKVFD…CRLLGHFVCK (112 aa)). N-linked (GlcNAc...) asparagine glycosylation is found at Asn-57 and Asn-60.

This sequence belongs to the snaclec family. As to quaternary structure, heterodimer; disulfide-linked. Expressed by the venom gland.

The protein resides in the secreted. In terms of biological role, interferes with one step of hemostasis (modulation of platelet aggregation, or coagulation cascade, for example). This chain is Snaclec B9, found in Macrovipera lebetinus (Levantine viper).